Here is a 170-residue protein sequence, read N- to C-terminus: Adenine phosphoribosyltransferase (170 aa).

This sequence belongs to the purine/pyrimidine phosphoribosyltransferase family. As to quaternary structure, homodimer.

The protein localises to the cytoplasm. The catalysed reaction is AMP + diphosphate = 5-phospho-alpha-D-ribose 1-diphosphate + adenine. It participates in purine metabolism; AMP biosynthesis via salvage pathway; AMP from adenine: step 1/1. In terms of biological role, catalyzes a salvage reaction resulting in the formation of AMP, that is energically less costly than de novo synthesis. This chain is Adenine phosphoribosyltransferase, found in Bacillus subtilis (strain 168).